The following is a 997-amino-acid chain: Protein translocase subunit SecA (997 aa).

ATP-binding positions include Q102, 120 to 124 (GEGKT), and D521. The tract at residues 893–997 (PADASPNGVV…KYKKCHGAEA (105 aa)) is disordered. Basic and acidic residues predominate over residues 938 to 953 (AIEREFEKKKQQELSH). Positions 981, 983, 992, and 993 each coordinate Zn(2+). Positions 987-997 (KKYKKCHGAEA) are enriched in basic residues.

This sequence belongs to the SecA family. Monomer and homodimer. Part of the essential Sec protein translocation apparatus which comprises SecA, SecYEG and auxiliary proteins SecDF. Other proteins may also be involved. Zn(2+) serves as cofactor.

The protein localises to the cell inner membrane. It is found in the cytoplasm. The catalysed reaction is ATP + H2O + cellular proteinSide 1 = ADP + phosphate + cellular proteinSide 2.. Its function is as follows. Part of the Sec protein translocase complex. Interacts with the SecYEG preprotein conducting channel. Has a central role in coupling the hydrolysis of ATP to the transfer of proteins into and across the cell membrane, serving as an ATP-driven molecular motor driving the stepwise translocation of polypeptide chains across the membrane. The polypeptide is Protein translocase subunit SecA (Acidobacterium capsulatum (strain ATCC 51196 / DSM 11244 / BCRC 80197 / JCM 7670 / NBRC 15755 / NCIMB 13165 / 161)).